Consider the following 121-residue polypeptide: Basic phospholipase A2 homolog BaTX (121 aa).

Disulfide bonds link Cys-26/Cys-115, Cys-28/Cys-44, Cys-43/Cys-95, Cys-49/Cys-121, Cys-50/Cys-88, Cys-57/Cys-81, and Cys-75/Cys-86. An important for membrane-damaging activities in eukaryotes and bacteria; heparin-binding region spans residues 105 to 117; it reads KKYRYYLKPLCKK.

It belongs to the phospholipase A2 family. Group II subfamily. K49 sub-subfamily. As to quaternary structure, homodimer; non-covalently linked. As to expression, expressed by the venom gland.

It localises to the secreted. Its function is as follows. Snake venom phospholipase A2 homolog that lacks enzymatic activity. Is myotoxic and displays edema-inducing activities. In vitro, produced time-dependent, irreversible neuromuscular blockade in isolated mouse phrenic nerve-diaphragm and chick biventer cervicis preparations. A model of myotoxic mechanism has been proposed: an apo Lys49-PLA2 is activated by the entrance of a hydrophobic molecule (e.g. fatty acid) at the hydrophobic channel of the protein leading to a reorientation of a monomer. This reorientation causes a transition between 'inactive' to 'active' states, causing alignment of C-terminal and membrane-docking sites (MDoS) side-by-side and putting the membrane-disruption sites (MDiS) in the same plane, exposed to solvent and in a symmetric position for both monomers. The MDoS region stabilizes the toxin on membrane by the interaction of charged residues with phospholipid head groups. Subsequently, the MDiS region destabilizes the membrane with penetration of hydrophobic residues. This insertion causes a disorganization of the membrane, allowing an uncontrolled influx of ions (i.e. calcium and sodium), and eventually triggering irreversible intracellular alterations and cell death. The sequence is that of Basic phospholipase A2 homolog BaTX from Bothrops alternatus (Urutu).